Reading from the N-terminus, the 956-residue chain is Chromatin assembly factor 1 subunit A (956 aa).

The interval Met1–Lys49 is binds to PCNA. The interval Met1–Thr314 is binds to CBX1 chromo shadow domain. Disordered regions lie at residues Val45 to Ser65 and Asp122 to Gly155. Residues Asp56–Ser65 show a composition bias toward polar residues. 5 positions are modified to phosphoserine: Ser65, Ser123, Ser138, Ser141, and Ser143. Lys182 participates in a covalent cross-link: Glycyl lysine isopeptide (Lys-Gly) (interchain with G-Cter in SUMO1); alternate. Residue Lys182 forms a Glycyl lysine isopeptide (Lys-Gly) (interchain with G-Cter in SUMO2); alternate linkage. Residues Val188–Gln222 are disordered. Phosphoserine is present on residues Ser206 and Ser224. The PxVxL motif signature appears at Phe233 to Leu246. 2 disordered regions span residues Pro250 to Arg432 and Asp599 to Gly639. Low complexity-rich tracts occupy residues Leu282–Pro296 and Ser307–Pro317. Ser310 carries the post-translational modification Phosphoserine. The segment covering Ser329–Arg432 has biased composition (basic and acidic residues). Acidic residues-rich tracts occupy residues Asp599–Gly610 and Gly618–Gly633. The necessary for homodimerization and competence for chromatin assembly stretch occupies residues Ser642–Phe678. Residues Arg660–Ser956 are binds to p60. The residue at position 722 (Thr722) is a Phosphothreonine. A disordered region spans residues Leu765–Ala790. Residues Ser767–Pro786 are compositionally biased toward polar residues. Phosphoserine occurs at positions 772, 775, and 803. Disordered regions lie at residues Ser844–Ser873 and Ser933–Ser956. Polar residues predominate over residues Ser855–Pro866. Phosphothreonine is present on Thr865. A phosphoserine mark is found at Ser868, Ser873, and Ser951.

The protein belongs to the CHAF1A family. As to quaternary structure, homodimer. Part of the CAF-1 complex that contains RBBP4, CHAF1B and CHAF1A. CHAF1A binds directly to CHAF1B. Only minor amounts of RBBP4 are complexed with CHAF1A and CHAF1B in G1 phase. Interacts with PCNA; the interaction is direct. Interacts (via the PxVxL motif) with CBX5; the interaction is direct. Interacts with MBD1. Interacts with histones H3.1, H3.2 and H3.1t.

It is found in the nucleus. In terms of biological role, acts as a component of the histone chaperone complex chromatin assembly factor 1 (CAF-1), which assembles histone octamers onto DNA during replication and repair. CAF-1 performs the first step of the nucleosome assembly process, bringing newly synthesized histones H3 and H4 to replicating DNA; histones H2A/H2B can bind to this chromatin precursor subsequent to DNA replication to complete the histone octamer. It may play a role in heterochromatin maintenance in proliferating cells by bringing newly synthesized cbx proteins to heterochromatic DNA replication foci. The sequence is that of Chromatin assembly factor 1 subunit A from Homo sapiens (Human).